A 316-amino-acid chain; its full sequence is Ribosomal RNA small subunit methyltransferase H (316 aa).

Residues Ser35–His37, Asp55, Phe84, Asp105, and Gln112 each bind S-adenosyl-L-methionine.

Belongs to the methyltransferase superfamily. RsmH family.

It localises to the cytoplasm. The enzyme catalyses cytidine(1402) in 16S rRNA + S-adenosyl-L-methionine = N(4)-methylcytidine(1402) in 16S rRNA + S-adenosyl-L-homocysteine + H(+). In terms of biological role, specifically methylates the N4 position of cytidine in position 1402 (C1402) of 16S rRNA. The sequence is that of Ribosomal RNA small subunit methyltransferase H from Streptococcus pyogenes serotype M49 (strain NZ131).